The chain runs to 402 residues: UPF0261 protein y4oU (402 aa).

The protein belongs to the UPF0261 family.

The sequence is that of UPF0261 protein y4oU from Sinorhizobium fredii (strain NBRC 101917 / NGR234).